The sequence spans 445 residues: Fatty acid desaturase 3 (445 aa).

Positions 1 to 21 are disordered; it reads MGGVGEPGPREGPAQPGAPLP. Residues 1–133 are Cytoplasmic-facing; that stretch reads MGGVGEPGPR…DMKLFDASPT (133 aa). One can recognise a Cytochrome b5 heme-binding domain in the interval 20 to 97; that stretch reads LPTFCWEQIR…LQPLLIGELA (78 aa). Residues 134–154 traverse the membrane as a helical segment; that stretch reads FFAFLLGHILAMEVLAWLLIY. The Lumenal portion of the chain corresponds to 155–159; sequence LLGPG. A helical transmembrane segment spans residues 160 to 180; it reads WVPSALAAFILAISQAQSWCL. Over 181 to 263 the chain is Cytoplasmic; sequence QHDLGHASIF…KRRYLPYNQQ (83 aa). The Histidine box-1 signature appears at 182-186; the sequence is HDLGH. The Histidine box-2 signature appears at 219-223; it reads HFQHH. Residues 264–284 traverse the membrane as a helical segment; sequence HLYFFLIGPPLLTLVNFEVEN. Residues 285–306 are Lumenal-facing; sequence LAYMLVCMQWADLLWAASFYAR. The helical transmembrane segment at 307–327 threads the bilayer; sequence FFLSYLPFYGVPGVLLFFVAV. The Cytoplasmic portion of the chain corresponds to 328 to 445; it reads RVLESHWFVW…DIWLDAYLHQ (118 aa). The Histidine box-3 motif lies at 383-387; that stretch reads QIEHH.

The protein belongs to the fatty acid desaturase type 1 family. In terms of tissue distribution, highly expressed in various organs and tissues including liver, kidney, brain, lung, pancreas, testis, ovary and skeletal muscle (at protein level).

The protein resides in the endoplasmic reticulum membrane. The enzyme catalyses an N-acylsphing-4-enine + 2 Fe(II)-[cytochrome b5] + O2 + 2 H(+) = an N-acyl-sphinga-4E,14Z-dienine + 2 Fe(III)-[cytochrome b5] + 2 H2O. It catalyses the reaction N-(hexanoyl)sphing-4-enine + 2 Fe(II)-[cytochrome b5] + O2 + 2 H(+) = N-hexanoyl-sphinga-4E,14Z-dienine + 2 Fe(III)-[cytochrome b5] + 2 H2O. The catalysed reaction is sphing-4-enine + 2 Fe(II)-[cytochrome b5] + O2 + 2 H(+) = sphinga-4E,14Z-dienine + 2 Fe(III)-[cytochrome b5] + 2 H2O. It carries out the reaction (11E)-octadecenoyl-CoA + 2 Fe(II)-[cytochrome b5] + O2 + 2 H(+) = (11E,13Z)-octadecadienoyl-CoA + 2 Fe(III)-[cytochrome b5] + 2 H2O. The enzyme catalyses N-acyl-1-deoxysphinganine + 2 Fe(II)-[cytochrome b5] + O2 + 2 H(+) = N-acyl-1-deoxysphing-14Z-enine + 2 Fe(III)-[cytochrome b5] + 2 H2O. It catalyses the reaction an N-acylsphinganine + 2 Fe(II)-[cytochrome b5] + O2 + 2 H(+) = an N-acylsphing-14Z-enine + 2 Fe(III)-[cytochrome b5] + 2 H2O. Its pathway is lipid metabolism; sphingolipid metabolism. It participates in lipid metabolism; polyunsaturated fatty acid biosynthesis. Its function is as follows. Mammals have different sphingoid bases that differ in their length and/or pattern of desaturation and hydroxyl groups. The predominant sphingoid base that comprises mammalian ceramides is sphing-4-enine (sphingosine or SPH) which has a trans (E) desaturation at carbon 4. FADS3 is a desaturase that introduces a cis (Z) double bond between carbon 14 and carbon 15 of the sphingoid base (also known as long chain base, LCB), producing LCBs such as sphinga-4,14-dienine (SPD, d18:2(4E,14Z)) from SPH. Prefers SPH-containing ceramides (N-acylsphing-4-enines) as substrates. Capable of metabolizing also the SPH in its free form. SPD ceramides occur widely in mammalian tissues and cells. Due to their unusual structure containing a cis double bond, SPD ceramides may have an opposite, negative role in lipid microdomain formation relative to conventional ceramides. Could be involved in the detoxification of 1-deoxy sphingolipids, by desaturating the cytotoxic 1-deoxysphinganine (1-deoxySA, m18:0), produced under pathological conditions, to 1-deoxysphingenine (1-deoxysphingosine, 1-deoxySO, m18:1). Although prefers SPH-containing ceramides (N-acylsphing-4-enines) as substrates, it also exhibits activity toward dihydrosphingosine-containing CERs (N-acylsphinganines) and produces 14Z-SPH-containing sphingolipids,which can be found in patients with DEGS1 mutations. Its desaturase mechanism involves an electron transfer facilitated by cytochrome b5. FADS3 also acts as a methyl-end fatty acyl coenzyme A (CoA) desaturase that introduces a cis double bond between the preexisting double bond and the terminal methyl group of the fatty acyl chain. Desaturates (11E)-octadecenoate (trans-vaccenoate, the predominant trans fatty acid in human milk) at carbon 13 to generate (11E,13Z)-octadecadienoate (also known as conjugated linoleic acid 11E,13Z-CLA). In Homo sapiens (Human), this protein is Fatty acid desaturase 3.